The sequence spans 178 residues: Crossover junction endodeoxyribonuclease RuvC (178 aa).

Active-site residues include Asp-8, Glu-72, and Asp-144. Mg(2+) is bound by residues Asp-8, Glu-72, and Asp-144.

The protein belongs to the RuvC family. Homodimer which binds Holliday junction (HJ) DNA. The HJ becomes 2-fold symmetrical on binding to RuvC with unstacked arms; it has a different conformation from HJ DNA in complex with RuvA. In the full resolvosome a probable DNA-RuvA(4)-RuvB(12)-RuvC(2) complex forms which resolves the HJ. The cofactor is Mg(2+).

It localises to the cytoplasm. It catalyses the reaction Endonucleolytic cleavage at a junction such as a reciprocal single-stranded crossover between two homologous DNA duplexes (Holliday junction).. Its function is as follows. The RuvA-RuvB-RuvC complex processes Holliday junction (HJ) DNA during genetic recombination and DNA repair. Endonuclease that resolves HJ intermediates. Cleaves cruciform DNA by making single-stranded nicks across the HJ at symmetrical positions within the homologous arms, yielding a 5'-phosphate and a 3'-hydroxyl group; requires a central core of homology in the junction. The consensus cleavage sequence is 5'-(A/T)TT(C/G)-3'. Cleavage occurs on the 3'-side of the TT dinucleotide at the point of strand exchange. HJ branch migration catalyzed by RuvA-RuvB allows RuvC to scan DNA until it finds its consensus sequence, where it cleaves and resolves the cruciform DNA. The chain is Crossover junction endodeoxyribonuclease RuvC from Idiomarina loihiensis (strain ATCC BAA-735 / DSM 15497 / L2-TR).